Consider the following 569-residue polypeptide: 4-coumarate-CoA ligase 2 (569 aa).

The segment at methionine 1–proline 24 is disordered. Residues serine 216–threonine 220, histidine 265, alanine 337–proline 339, glutamine 359–glycine 360, threonine 364, aspartate 448, arginine 463, and lysine 554 each bind ATP. The SBD1 stretch occupies residues glutamate 290–glutamine 359. Positions glycine 360–tyrosine 427 are SBD2.

This sequence belongs to the ATP-dependent AMP-binding enzyme family. In terms of tissue distribution, mostly expressed in stems, and, to a lower extent, in bulbs.

The enzyme catalyses (E)-4-coumarate + ATP + CoA = (E)-4-coumaroyl-CoA + AMP + diphosphate. It functions in the pathway phytoalexin biosynthesis; 3,4',5-trihydroxystilbene biosynthesis; 3,4',5-trihydroxystilbene from trans-4-coumarate: step 1/2. Produces CoA thioesters of a variety of hydroxy- and methoxy-substituted cinnamic acids, which are used to synthesize several phenylpropanoid-derived compounds, including anthocyanins, flavonoids, isoflavonoids, coumarins, lignin, suberin and wall-bound phenolics. This is 4-coumarate-CoA ligase 2 from Narcissus pseudonarcissus (Daffodil).